Reading from the N-terminus, the 1913-residue chain is GREB1-like protein (1913 aa).

Residues 86-96 (MEDDEDEEEMS) show a composition bias toward acidic residues. Disordered regions lie at residues 86–111 (MEDDEDEEEMSDSNSPPIPYSQKPAP), 281–309 (NGTSGHGGKSSSCSSTPSRPGNYSLSPRP), 1097–1157 (EAER…TSSI), and 1179–1207 (DSLDPPMASSTTSKPSSSSSSSAQALAWS). The segment covering 289–301 (KSSSCSSTPSRPG) has biased composition (low complexity). The span at 1118 to 1157 (PQSNSSAVTGTSGSIMENGVSSSSTAGKPQQQLLTPTSSI) shows a compositional bias: polar residues. The span at 1187 to 1200 (SSTTSKPSSSSSSS) shows a compositional bias: low complexity. The helical transmembrane segment at 1832 to 1852 (GVFFSGLLLYLCDSFVGADLL) threads the bilayer.

Belongs to the GREB1 family. Expressed in the inner ear, with a high presence in the spiral ganglia, cochlear nerve bundles, and hair cells.

It is found in the membrane. Functionally, plays a major role in early metanephros and genital development. This Mus musculus (Mouse) protein is GREB1-like protein (Greb1l).